A 93-amino-acid polypeptide reads, in one-letter code: Small ribosomal subunit protein uS19 (93 aa).

Belongs to the universal ribosomal protein uS19 family.

In terms of biological role, protein S19 forms a complex with S13 that binds strongly to the 16S ribosomal RNA. This is Small ribosomal subunit protein uS19 from Leptospira interrogans serogroup Icterohaemorrhagiae serovar copenhageni (strain Fiocruz L1-130).